The following is a 378-amino-acid chain: Acetylornithine deacetylase (378 aa).

Histidine 76 provides a ligand contact to Zn(2+). Residue aspartate 78 is part of the active site. A Zn(2+)-binding site is contributed by aspartate 108. Residue glutamate 140 is part of the active site. Residues glutamate 141, glutamate 165, and histidine 351 each coordinate Zn(2+).

This sequence belongs to the peptidase M20A family. ArgE subfamily. Homodimer. Requires Zn(2+) as cofactor. Co(2+) serves as cofactor. Glutathione is required as a cofactor.

The protein localises to the cytoplasm. It carries out the reaction N(2)-acetyl-L-ornithine + H2O = L-ornithine + acetate. It participates in amino-acid biosynthesis; L-arginine biosynthesis; L-ornithine from N(2)-acetyl-L-ornithine (linear): step 1/1. In terms of biological role, catalyzes the hydrolysis of the amide bond of N(2)-acetylated L-amino acids. Cleaves the acetyl group from N-acetyl-L-ornithine to form L-ornithine, an intermediate in L-arginine biosynthesis pathway, and a branchpoint in the synthesis of polyamines. The protein is Acetylornithine deacetylase of Vibrio campbellii (strain ATCC BAA-1116).